An 85-amino-acid polypeptide reads, in one-letter code: U4-theraphotoxin-Hhn1f (85 aa).

The signal sequence occupies residues 1 to 22; sequence MKVTLIAILTCAAVLVLHTTAA. Residues 23-48 constitute a propeptide that is removed on maturation; that stretch reads EELEAESQLMEVGMPDTELAAVDEER. C71 and C82 are oxidised to a cystine.

The protein belongs to the neurotoxin 12 (Hwtx-2) family. 02 (Hwtx-2) subfamily. Expressed by the venom gland.

Its subcellular location is the secreted. Its function is as follows. Postsynaptic neurotoxin. The chain is U4-theraphotoxin-Hhn1f from Cyriopagopus hainanus (Chinese bird spider).